We begin with the raw amino-acid sequence, 237 residues long: Phosphoribosylaminoimidazole-succinocarboxamide synthase (237 aa).

It belongs to the SAICAR synthetase family.

It carries out the reaction 5-amino-1-(5-phospho-D-ribosyl)imidazole-4-carboxylate + L-aspartate + ATP = (2S)-2-[5-amino-1-(5-phospho-beta-D-ribosyl)imidazole-4-carboxamido]succinate + ADP + phosphate + 2 H(+). It functions in the pathway purine metabolism; IMP biosynthesis via de novo pathway; 5-amino-1-(5-phospho-D-ribosyl)imidazole-4-carboxamide from 5-amino-1-(5-phospho-D-ribosyl)imidazole-4-carboxylate: step 1/2. The polypeptide is Phosphoribosylaminoimidazole-succinocarboxamide synthase (Listeria monocytogenes serotype 4a (strain HCC23)).